The primary structure comprises 103 residues: Large ribosomal subunit protein uL24 (103 aa).

Belongs to the universal ribosomal protein uL24 family. In terms of assembly, part of the 50S ribosomal subunit.

Its function is as follows. One of two assembly initiator proteins, it binds directly to the 5'-end of the 23S rRNA, where it nucleates assembly of the 50S subunit. In terms of biological role, one of the proteins that surrounds the polypeptide exit tunnel on the outside of the subunit. The chain is Large ribosomal subunit protein uL24 from Christiangramia forsetii (strain DSM 17595 / CGMCC 1.15422 / KT0803) (Gramella forsetii).